Here is a 489-residue protein sequence, read N- to C-terminus: Glucose-6-phosphate 1-dehydrogenase (489 aa).

Residues arginine 50 and lysine 151 each coordinate NADP(+). Residues histidine 181, lysine 185, glutamate 219, and aspartate 238 each contribute to the substrate site. Residue histidine 243 is the Proton acceptor of the active site. Lysine 341 and lysine 346 together coordinate substrate.

Belongs to the glucose-6-phosphate dehydrogenase family. In terms of assembly, homodimer.

The enzyme catalyses D-glucose 6-phosphate + NADP(+) = 6-phospho-D-glucono-1,5-lactone + NADPH + H(+). It functions in the pathway carbohydrate degradation; pentose phosphate pathway; D-ribulose 5-phosphate from D-glucose 6-phosphate (oxidative stage): step 1/3. Catalyzes the oxidation of glucose 6-phosphate to 6-phosphogluconolactone. The sequence is that of Glucose-6-phosphate 1-dehydrogenase from Gluconobacter oxydans (strain 621H) (Gluconobacter suboxydans).